Consider the following 209-residue polypeptide: Glutathione S-transferase F7 (209 aa).

Positions 2 to 83 (AGIKVFGHPA…YIAHFYSDKG (82 aa)) constitute a GST N-terminal domain. Residues 12 to 13 (ST), 41 to 42 (HK), 54 to 55 (KV), and 67 to 68 (ES) each bind glutathione. Positions 90-209 (GSKDIAGIAM…TSRPSAKKVL (120 aa)) constitute a GST C-terminal domain.

This sequence belongs to the GST superfamily. Phi family.

The protein resides in the cytoplasm. It is found in the cytosol. The catalysed reaction is RX + glutathione = an S-substituted glutathione + a halide anion + H(+). Functionally, may be involved in the conjugation of reduced glutathione to a wide number of exogenous and endogenous hydrophobic electrophiles and have a detoxification role against certain herbicides. This chain is Glutathione S-transferase F7, found in Arabidopsis thaliana (Mouse-ear cress).